A 281-amino-acid polypeptide reads, in one-letter code: Phytanoyl-CoA dioxygenase 1 (281 aa).

2-oxoglutarate contacts are provided by residues Lys98, Met137, 152–154, and Trp169; that span reads HQD. Residues His152 and Asp154 each coordinate Fe cation. Fe cation is bound at residue His237. Residues Ser239 and Arg248 each contribute to the 2-oxoglutarate site.

The protein belongs to the PhyH family. The cofactor is Fe cation. L-ascorbate serves as cofactor.

It carries out the reaction phytanoyl-CoA + 2-oxoglutarate + O2 = 2-hydroxyphytanoyl-CoA + succinate + CO2. It functions in the pathway lipid metabolism; fatty acid metabolism. Functionally, converts phytanoyl-CoA to 2-hydroxyphytanoyl-CoA. In Oryza sativa subsp. japonica (Rice), this protein is Phytanoyl-CoA dioxygenase 1.